The sequence spans 117 residues: uncharacterized protein (117 aa).

This is an uncharacterized protein from Bacillus subtilis (strain 168).